The chain runs to 290 residues: 33 kDa chaperonin (290 aa).

Disulfide bonds link Cys-235/Cys-237 and Cys-268/Cys-271.

It belongs to the HSP33 family. In terms of processing, under oxidizing conditions two disulfide bonds are formed involving the reactive cysteines. Under reducing conditions zinc is bound to the reactive cysteines and the protein is inactive.

It localises to the cytoplasm. Its function is as follows. Redox regulated molecular chaperone. Protects both thermally unfolding and oxidatively damaged proteins from irreversible aggregation. Plays an important role in the bacterial defense system toward oxidative stress. This is 33 kDa chaperonin from Streptococcus pneumoniae serotype 19F (strain G54).